A 407-amino-acid polypeptide reads, in one-letter code: MGDKAGTRVFKKSSPNCKVTVYLGKRDFVDHLDQVDPVDGVILVDPEYLKDRKVFVTLTCAFRYGREDLDVLGLSFRKDLYISTFQAFPPIAEERKANSRLQERLLKKLGQQAHPFYFTIPQNLPCSVTLQPGPEDTGKACGVDFEIRAFCAKSIEEKIHKRNSVRLVIRKVQYAPEKPGPQPMVETTRSFLMSDRSLHLEASLDKELYYHGEPISVNVHVTNNSTKTVKRLKISVRQYADICLFSTAQYKCPVAQVEADDQVSSSSTFCKVYTLTPTLDKNREKRGLALDGKLKHEDTNLASSTIVKDVTNKEVLGILVSYRVKVKLVISRGGDVSVELPFVLMHPKPTELPISRPQSAVPDSDPPIDTNLIEFETNSFSQDDDFVFEDFARLRLKGMADDKDDDC.

This sequence belongs to the arrestin family.

The protein localises to the cytoplasm. The sequence is that of Arrestin red cell isoform 1 from Oncorhynchus mykiss (Rainbow trout).